The sequence spans 163 residues: MTFKTPDLCDEFESELGKTVRVVTPMFQRYGGRTSFSGQIVTLKIFEDNSLVREVFGEDGKGKVLVIDGGGSLRCALVGDQLAILANKNGWEGVVVYGCIRDSGDINGIDIGVRALNTHPQKTLKKGVGDKNVAVTFGGVTFNPGEYLYADEDGVLVSGKALT.

Residues 79-82 (GDQL) and arginine 101 each bind substrate. Aspartate 102 provides a ligand contact to a divalent metal cation.

This sequence belongs to the class II aldolase/RraA-like family. As to quaternary structure, homotrimer. It depends on a divalent metal cation as a cofactor.

The catalysed reaction is 4-hydroxy-4-methyl-2-oxoglutarate = 2 pyruvate. It carries out the reaction oxaloacetate + H(+) = pyruvate + CO2. In terms of biological role, catalyzes the aldol cleavage of 4-hydroxy-4-methyl-2-oxoglutarate (HMG) into 2 molecules of pyruvate. Also contains a secondary oxaloacetate (OAA) decarboxylase activity due to the common pyruvate enolate transition state formed following C-C bond cleavage in the retro-aldol and decarboxylation reactions. The chain is Putative 4-hydroxy-4-methyl-2-oxoglutarate aldolase from Dechloromonas aromatica (strain RCB).